A 329-amino-acid polypeptide reads, in one-letter code: Aspartate carbamoyltransferase catalytic subunit (329 aa).

Residues R63 and T64 each coordinate carbamoyl phosphate. Residue K91 participates in L-aspartate binding. R113, H141, and Q144 together coordinate carbamoyl phosphate. L-aspartate-binding residues include R179 and R234. Carbamoyl phosphate is bound by residues G275 and P276.

The protein belongs to the aspartate/ornithine carbamoyltransferase superfamily. ATCase family. Heterododecamer (2C3:3R2) of six catalytic PyrB chains organized as two trimers (C3), and six regulatory PyrI chains organized as three dimers (R2).

It carries out the reaction carbamoyl phosphate + L-aspartate = N-carbamoyl-L-aspartate + phosphate + H(+). The protein operates within pyrimidine metabolism; UMP biosynthesis via de novo pathway; (S)-dihydroorotate from bicarbonate: step 2/3. In terms of biological role, catalyzes the condensation of carbamoyl phosphate and aspartate to form carbamoyl aspartate and inorganic phosphate, the committed step in the de novo pyrimidine nucleotide biosynthesis pathway. This chain is Aspartate carbamoyltransferase catalytic subunit, found in Magnetococcus marinus (strain ATCC BAA-1437 / JCM 17883 / MC-1).